A 341-amino-acid polypeptide reads, in one-letter code: Small ribosomal subunit protein uS3 (341 aa).

The region spanning 38–106 (IRRMMTRGME…QVQLNILEVK (69 aa)) is the KH type-2 domain. Disordered regions lie at residues 224 to 246 (RAVR…LETA) and 274 to 341 (PAGQ…TKEG). 2 stretches are compositionally biased toward low complexity: residues 285-303 (AEQP…VTGE) and 311-333 (AAPA…DAPS).

The protein belongs to the universal ribosomal protein uS3 family. In terms of assembly, part of the 30S ribosomal subunit. Forms a tight complex with proteins S10 and S14.

Binds the lower part of the 30S subunit head. Binds mRNA in the 70S ribosome, positioning it for translation. The chain is Small ribosomal subunit protein uS3 from Acidothermus cellulolyticus (strain ATCC 43068 / DSM 8971 / 11B).